We begin with the raw amino-acid sequence, 723 residues long: MRFSKLSLAITTTLVTANALAQSVELDSINVIATRDPSRFAYTPEKQSKDSLLSKQATSVADALEDIPNVDVRGGSRSIAQKPNIRGLSDNRVVQVIDGVRQNFDLAHRGSYFLPMSLIQEIEVIKGPSSSLWGSGALGGVVAMRTPNALDLLKNNDKFGVKIRQGYQTANNLSEKDVSVFAANDKFDVLISGFYNNADNLRTGKGNKLNNTAYKQFGGLAKFGWQINDANRVELSHRETRFKQTAPSNNEVENELTNEQITDQIKKFHGQKDDLLPPTTQPSPSERSEFYSKVKTRLGSVSYLTDQQIPDQSTVFNYYLTPDNPYLNTHIALYNNKTIEKEQRKVSGVKDQTKLTTRGINLRNSSELSHISFVYGVDYMRDKIRTERGTNGSDAKFRADPYNANSNTTGVYLIAHIPLFGEKLLVSPSVRYDHYDTSSKTVKYKDNHLSPATKLTWIVTNWLDFTAKYNEAFRAPSMQERFVSGAHFGANTLGLDHINRFVANPNLRPETAKNKEITANLHFDSLFKQGDKFKIEATYFRNDVKDFINLKIFNDAKTSASAGANPNTNGALLPKNSQYQNITNARLSGIELQAQYQTERLTLFTNYGSTKGKDKDSGEALSNIAASKIGVGVNYALVKDKFTVGATVTHYAAQRRVPKDHSVTYPSYILTDLRATYAPLKGEWKNLRLDFALENLFDRKYQPAFSLMEGTGRNAKISAVYSF.

The first 21 residues, 1–21 (MRFSKLSLAITTTLVTANALA), serve as a signal peptide directing secretion. A TBDR plug domain is found at 36-147 (DPSRFAYTPE…LGGVVAMRTP (112 aa)). A TBDR beta-barrel domain is found at 158 to 723 (KFGVKIRQGY…NAKISAVYSF (566 aa)). A TonB C-terminal box motif is present at residues 706-723 (SLMEGTGRNAKISAVYSF).

The protein belongs to the TonB-dependent receptor family.

Its subcellular location is the cell outer membrane. Required for utilization of free heme at low concentrations. In Haemophilus influenzae (strain ATCC 51907 / DSM 11121 / KW20 / Rd), this protein is Heme/hemopexin utilization protein C (hxuC).